The following is a 305-amino-acid chain: Aspartate carbamoyltransferase catalytic subunit (305 aa).

2 residues coordinate carbamoyl phosphate: Arg54 and Thr55. Residue Lys83 participates in L-aspartate binding. Carbamoyl phosphate contacts are provided by Arg104, His132, and Gln135. The L-aspartate site is built by Arg165 and Arg226. Carbamoyl phosphate contacts are provided by Leu265 and Pro266.

It belongs to the aspartate/ornithine carbamoyltransferase superfamily. ATCase family. Heterooligomer of catalytic and regulatory chains.

The enzyme catalyses carbamoyl phosphate + L-aspartate = N-carbamoyl-L-aspartate + phosphate + H(+). The protein operates within pyrimidine metabolism; UMP biosynthesis via de novo pathway; (S)-dihydroorotate from bicarbonate: step 2/3. Catalyzes the condensation of carbamoyl phosphate and aspartate to form carbamoyl aspartate and inorganic phosphate, the committed step in the de novo pyrimidine nucleotide biosynthesis pathway. This is Aspartate carbamoyltransferase catalytic subunit from Pyrobaculum calidifontis (strain DSM 21063 / JCM 11548 / VA1).